The following is an 86-amino-acid chain: RNA-binding protein Hfq (86 aa).

The Sm domain occupies 9–68 (DPYLNTLRKEKVPVSIYLVNGIKLQGQIESFDQFVVLLKNTVSQMVYKHAISTVVPARPV). Residues 66–86 (RPVRLPSPSDAEHGDSEPGNA) form a disordered region. The segment covering 75 to 86 (DAEHGDSEPGNA) has biased composition (basic and acidic residues).

The protein belongs to the Hfq family. Homohexamer.

Functionally, RNA chaperone that binds small regulatory RNA (sRNAs) and mRNAs to facilitate mRNA translational regulation in response to envelope stress, environmental stress and changes in metabolite concentrations. Also binds with high specificity to tRNAs. This is RNA-binding protein Hfq from Pseudomonas entomophila (strain L48).